Consider the following 470-residue polypeptide: Sulfate adenylyltransferase subunit 1 (470 aa).

The tr-type G domain occupies 22–237 (KEVLRFITCG…LEEVPVKSEE (216 aa)). A G1 region spans residues 31–38 (GSVDDGKS). 31-38 (GSVDDGKS) is a GTP binding site. The tract at residues 89–93 (GITID) is G2. Residues 110–113 (DTPG) are G3. GTP-binding positions include 110-114 (DTPGH) and 165-168 (NKMD). The G4 stretch occupies residues 165 to 168 (NKMD). The interval 202 to 204 (SAK) is G5.

The protein belongs to the TRAFAC class translation factor GTPase superfamily. Classic translation factor GTPase family. CysN/NodQ subfamily. As to quaternary structure, heterodimer composed of CysD, the smaller subunit, and CysN.

It carries out the reaction sulfate + ATP + H(+) = adenosine 5'-phosphosulfate + diphosphate. It participates in sulfur metabolism; hydrogen sulfide biosynthesis; sulfite from sulfate: step 1/3. With CysD forms the ATP sulfurylase (ATPS) that catalyzes the adenylation of sulfate producing adenosine 5'-phosphosulfate (APS) and diphosphate, the first enzymatic step in sulfur assimilation pathway. APS synthesis involves the formation of a high-energy phosphoric-sulfuric acid anhydride bond driven by GTP hydrolysis by CysN coupled to ATP hydrolysis by CysD. The protein is Sulfate adenylyltransferase subunit 1 of Methylorubrum populi (strain ATCC BAA-705 / NCIMB 13946 / BJ001) (Methylobacterium populi).